The primary structure comprises 633 residues: Pollen receptor-like kinase 3 (633 aa).

An N-terminal signal peptide occupies residues 1 to 19; sequence MTAVLFLCFLLICFSFTPS. Residues asparagine 22 and asparagine 37 are each glycosylated (N-linked (GlcNAc...) asparagine). Cysteine 53 and cysteine 62 form a disulfide bridge. LRR repeat units follow at residues 90–115, 117–137, 138–162, 163–186, and 188–210; these read LPNL…KLPG, KSLL…FFKE, TPQL…LMQL, AGLE…TDGN, and VLKS…ISDR. N-linked (GlcNAc...) asparagine glycosylation is present at asparagine 123. The cysteines at positions 224 and 232 are disulfide-linked. Residue asparagine 246 is glycosylated (N-linked (GlcNAc...) asparagine). The chain crosses the membrane as a helical span at residues 249–269; sequence AKAIFMVILFLLIFLFVVAII. Residues 294 to 314 are compositionally biased toward basic and acidic residues; that stretch reads VEVRVPDSIKKPIDSSKKRSN. Residues 294-339 form a disordered region; it reads VEVRVPDSIKKPIDSSKKRSNAEGSSKKGSSHNGKGAGGGPGSGMG. Residues 328 to 338 show a composition bias toward gly residues; sequence KGAGGGPGSGM. The Protein kinase domain occupies 358 to 633; it reads KAAAEVLGNG…IVRRIERVTL (276 aa). Residues 364 to 372 and lysine 386 contribute to the ATP site; that span reads LGNGSLGSA. Serine 438 carries the post-translational modification Phosphoserine. Threonine 458 is subject to Phosphothreonine. Position 535 is a phosphoserine (serine 535).

It belongs to the protein kinase superfamily. Ser/Thr protein kinase family. Interacts in vitro with ROPGEF1 (via PRONE domain). Interacts with PRK6. In terms of tissue distribution, expressed in pollen and/or in flowers, but not in leaves.

It is found in the membrane. The catalysed reaction is L-seryl-[protein] + ATP = O-phospho-L-seryl-[protein] + ADP + H(+). It catalyses the reaction L-threonyl-[protein] + ATP = O-phospho-L-threonyl-[protein] + ADP + H(+). The phosphorylation activity is calcium-independent. Receptor-like kinase involved in the control of pollen germination and pollen tube polar growth. Can phosphorylate ROPGEF1 in vitro. This Arabidopsis thaliana (Mouse-ear cress) protein is Pollen receptor-like kinase 3.